Reading from the N-terminus, the 233-residue chain is DNA-directed RNA polymerase V subunit 5C (233 aa).

This sequence belongs to the archaeal Rpo5/eukaryotic RPB5 RNA polymerase subunit family. As to quaternary structure, component of the RNA polymerase V complex. As to expression, expressed in flower buds and siliques.

The protein resides in the nucleus. In terms of biological role, DNA-dependent RNA polymerase catalyzes the transcription of DNA into RNA using the four ribonucleoside triphosphates as substrates. Component of RNA polymerase V involved in RNA-directed DNA methylation-dependent (RdDM) silencing of endogenous repeated sequences, including transposable elements. The protein is DNA-directed RNA polymerase V subunit 5C (NRPE5C) of Arabidopsis thaliana (Mouse-ear cress).